Here is a 1839-residue protein sequence, read N- to C-terminus: Nuclear pore complex protein DDB_G0274915 (1839 aa).

Polar residues-rich tracts occupy residues 1–27 and 35–54; these read MNGR…NTIN and NGSL…QTNK. Disordered stretches follow at residues 1-54, 78-150, 325-367, 480-568, 589-636, 657-705, 739-810, 818-837, 846-1106, and 1129-1839; these read MNGR…QTNK, DESS…ISDD, KQFD…PNAD, PLNK…FSTT, TTIA…GGGV, VSTS…DVPG, TTTT…DSKT, PTTE…SSLF, TTPS…FSSN, and TTAT…AKKK. The segment covering 80–90 has biased composition (low complexity); sequence SSSSSSSSSSS. Residues 91 to 101 show a composition bias toward polar residues; it reads YDDGNNIPQKG. Composition is skewed to low complexity over residues 102-148 and 329-343; these read SSTT…INIS and DNNN…SIYN. Residues 344–354 show a composition bias toward polar residues; sequence RQSIYSPNSKI. Composition is skewed to low complexity over residues 495–568 and 589–607; these read TYAT…FSTT and TTIA…SSSS. Residues 616–628 show a composition bias toward polar residues; that stretch reads MFTSDSNKSNLFS. Composition is skewed to low complexity over residues 658–671 and 739–760; these read STST…SKSS and TTTT…TTDK. Residues 761–773 show a composition bias toward basic and acidic residues; sequence SSADKSSADKSST. Composition is skewed to low complexity over residues 774 to 803, 827 to 837, and 846 to 871; these read DKST…TTTT, PTTSLTSSSLF, and TTPS…NTTT. 2 stretches are compositionally biased toward acidic residues: residues 896–923 and 944–958; these read ESDE…EAEE and LEAE…DSDE. Composition is skewed to low complexity over residues 1005 to 1021 and 1046 to 1060; these read GSSL…SFLT and SSSS…IPTT. Basic and acidic residues predominate over residues 1061-1070; that stretch reads SKKEKIDDKP. Positions 1071-1092 are enriched in low complexity; the sequence is STTTTTTTTSLFGSTTTSGLFS. Polar residues predominate over residues 1093-1106; it reads NPSTTSTGSLFSSN. Composition is skewed to low complexity over residues 1129 to 1242 and 1250 to 1292; these read TTAT…FGST and ATTT…GLFG. Positions 1293 to 1310 are enriched in polar residues; the sequence is ASSSTTPSTGLFGSATTP. 2 stretches are compositionally biased toward low complexity: residues 1311–1384 and 1397–1498; these read STGL…TTPP and LFGT…TTAT. Residues 1507 to 1521 are compositionally biased toward polar residues; sequence TAPSTGLFGSTTATN. Residues 1522-1673 show a composition bias toward low complexity; it reads PSTGLFGSTT…SSTPFGASPF (152 aa). Over residues 1676-1708 the composition is skewed to polar residues; it reads PTSTSSPPFGAPTSASSTPFGAPQISTSSSTNL. The span at 1712 to 1810 shows a compositional bias: low complexity; that stretch reads ASSSTAAPSF…PFGSTPSTAP (99 aa).

In Dictyostelium discoideum (Social amoeba), this protein is Nuclear pore complex protein DDB_G0274915.